The following is a 475-amino-acid chain: NADP-dependent glyceraldehyde-3-phosphate dehydrogenase (475 aa).

Arg103 serves as a coordination point for substrate. Ser151 contributes to the NADP(+) binding site. A substrate-binding site is contributed by 154–155; sequence NY. NADP(+) contacts are provided by residues Lys177, Thr180, Asp215, and 230–251; that span reads GSTG…MLEL. Residues Glu250 and Cys284 contribute to the active site. Position 283–285 (283–285) interacts with substrate; that stretch reads RCT. Glu377 is a binding site for NADP(+). Residue Arg437 coordinates substrate.

It belongs to the aldehyde dehydrogenase family. In terms of assembly, homotetramer.

The catalysed reaction is D-glyceraldehyde 3-phosphate + NADP(+) + H2O = (2R)-3-phosphoglycerate + NADPH + 2 H(+). The protein is NADP-dependent glyceraldehyde-3-phosphate dehydrogenase (gapN) of Streptococcus mutans serotype c (strain ATCC 700610 / UA159).